The sequence spans 384 residues: 1-deoxy-D-xylulose 5-phosphate reductoisomerase (384 aa).

NADPH-binding residues include threonine 10, glycine 11, serine 12, isoleucine 13, arginine 37, asparagine 38, and asparagine 124. Lysine 125 is a binding site for 1-deoxy-D-xylulose 5-phosphate. Glutamate 126 provides a ligand contact to NADPH. Aspartate 150 provides a ligand contact to Mn(2+). 1-deoxy-D-xylulose 5-phosphate contacts are provided by serine 151, glutamate 152, serine 176, and histidine 199. Mn(2+) is bound at residue glutamate 152. Glycine 205 lines the NADPH pocket. 4 residues coordinate 1-deoxy-D-xylulose 5-phosphate: serine 212, asparagine 217, lysine 218, and glutamate 221. Mn(2+) is bound at residue glutamate 221.

It belongs to the DXR family. The cofactor is Mg(2+). Mn(2+) serves as cofactor.

It catalyses the reaction 2-C-methyl-D-erythritol 4-phosphate + NADP(+) = 1-deoxy-D-xylulose 5-phosphate + NADPH + H(+). It participates in isoprenoid biosynthesis; isopentenyl diphosphate biosynthesis via DXP pathway; isopentenyl diphosphate from 1-deoxy-D-xylulose 5-phosphate: step 1/6. Catalyzes the NADPH-dependent rearrangement and reduction of 1-deoxy-D-xylulose-5-phosphate (DXP) to 2-C-methyl-D-erythritol 4-phosphate (MEP). This Clostridium perfringens (strain 13 / Type A) protein is 1-deoxy-D-xylulose 5-phosphate reductoisomerase.